Here is a 909-residue protein sequence, read N- to C-terminus: Protein translocase subunit SecA (909 aa).

ATP is bound by residues Gln-85, 103–107 (GEGKT), and Asp-512. A disordered region spans residues 866–899 (HETSATGGEEEINKPVVKGKKIGRNDPCPCGSGK). Zn(2+) contacts are provided by Cys-893, Cys-895, Cys-904, and Cys-905.

The protein belongs to the SecA family. In terms of assembly, monomer and homodimer. Part of the essential Sec protein translocation apparatus which comprises SecA, SecYEG and auxiliary proteins SecDF. Other proteins may also be involved. It depends on Zn(2+) as a cofactor.

It localises to the cell membrane. Its subcellular location is the cytoplasm. It carries out the reaction ATP + H2O + cellular proteinSide 1 = ADP + phosphate + cellular proteinSide 2.. Functionally, part of the Sec protein translocase complex. Interacts with the SecYEG preprotein conducting channel. Has a central role in coupling the hydrolysis of ATP to the transfer of proteins into and across the cell membrane, serving as an ATP-driven molecular motor driving the stepwise translocation of polypeptide chains across the membrane. The polypeptide is Protein translocase subunit SecA (Finegoldia magna (strain ATCC 29328 / DSM 20472 / WAL 2508) (Peptostreptococcus magnus)).